Here is a 461-residue protein sequence, read N- to C-terminus: Coronin-1A (461 aa).

Ser2 is subject to N-acetylserine. Ser2 bears the Phosphoserine; by PKC mark. 7 WD repeats span residues 13–63 (HVFG…LVLP), 73–110 (NVPL…MVWE), 123–160 (PVIT…LVWD), 164–204 (GAAV…RVIE), 207–251 (KGTV…ALWD), 258–296 (PLSL…RYFE), and 302–349 (PFLH…EPIA). Over residues 403-418 (ELRVNRGLDSARRRAT) the composition is skewed to basic and acidic residues. The segment at 403 to 434 (ELRVNRGLDSARRRATPEPSGTPSSDTVSRLE) is disordered. Ser412 is modified (phosphoserine; by PKC). Thr418 carries the post-translational modification Phosphothreonine. Residues 421 to 430 (PSGTPSSDTV) show a composition bias toward polar residues. Ser422 carries the phosphoserine modification. Residues 424–461 (TPSSDTVSRLEEDVRNLNAIVQKLQERLDRLEETVQAK) are a coiled coil.

The protein belongs to the WD repeat coronin family. Binds actin. Post-translationally, phosphorylation at Ser-412 by PKC strongly down-regulates the association with actin. Polyubiquitinated by RNF128 with 'Lys-48'-linked chains, leading to proteasomal degradation. Expressed in spleen, lymph nodes, thymus, brain and at very lower levels in lung. Also expressed in cells of the lymphoid/myeloid lineage. Not expressed in Kuffper cells.

The protein resides in the cytoplasm. It is found in the cytoskeleton. It localises to the cell cortex. Its subcellular location is the cytoplasmic vesicle. The protein localises to the phagosome membrane. In terms of biological role, may be a crucial component of the cytoskeleton of highly motile cells, functioning both in the invagination of large pieces of plasma membrane, as well as in forming protrusions of the plasma membrane involved in cell locomotion. In mycobacteria-infected cells, its retention on the phagosomal membrane prevents fusion between phagosomes and lysosomes. The polypeptide is Coronin-1A (Coro1a) (Mus musculus (Mouse)).